A 370-amino-acid polypeptide reads, in one-letter code: Gibberellin 2-beta-dioxygenase 2 (370 aa).

Residues 186–306 (DNDSLIRINH…RLSTIYFAAP (121 aa)) form the Fe2OG dioxygenase domain. A 2-oxoglutarate-binding site is contributed by tyrosine 196. Histidine 224, aspartate 226, and histidine 287 together coordinate Fe cation. The 2-oxoglutarate site is built by arginine 297 and serine 299.

The protein belongs to the iron/ascorbate-dependent oxidoreductase family. GA2OX subfamily. Fe(2+) is required as a cofactor.

It carries out the reaction gibberellin A1 + 2-oxoglutarate + O2 = gibberellin A8 + succinate + CO2. Functionally, catalyzes the 2-beta-hydroxylation of several biologically active gibberellins, leading to the homeostatic regulation of their endogenous level. Catabolism of gibberellins (GAs) plays a central role in plant development. This chain is Gibberellin 2-beta-dioxygenase 2, found in Oryza sativa subsp. japonica (Rice).